The chain runs to 257 residues: Global transcriptional regulator CodY (257 aa).

The GAF domain stretch occupies residues 1 to 155 (MSLLSKTREL…AATVIGMEIL (155 aa)). GTP contacts are provided by V22, F24, S43, R44, R45, and K47. L-isoleucine-binding residues include R61, T96, and F98. Residues E153 and K158 each contribute to the GTP site. The segment at residues 203–222 (ASKVADRVGITRSVIVNALR) is a DNA-binding region (H-T-H motif).

This sequence belongs to the CodY family. Homodimer. Homotetramer. May form homodimers under conditions in which energy sources are sufficient (active state) and homotetramers under insufficient nutrient conditions (inactive state).

It is found in the cytoplasm. Activity of CodY is modulated by interaction with two types of effectors: the branched-chain amino acids (BCAAs) leucine, isoleucine and valine, which are signals of the nutritional status of the cell, and GTP, which may signal the energetic status of the cell. Functionally, DNA-binding global transcriptional regulator which is involved in the adaptive response to starvation and acts by directly or indirectly controlling the expression of numerous genes in response to nutrient availability. During rapid exponential growth, CodY is highly active and represses genes whose products allow adaptation to nutrient depletion. The protein is Global transcriptional regulator CodY of Staphylococcus aureus (strain Mu3 / ATCC 700698).